The sequence spans 215 residues: Cytochrome b6 (215 aa).

The helical transmembrane segment at 32–52 (VFYCFGGMTLTCFLVQLATGF) threads the bilayer. Cys35 serves as a coordination point for heme c. Residues His86 and His100 each contribute to the heme b site. Helical transmembrane passes span 90-110 (ASMM…TGGF), 116-136 (LTWI…VTGY), and 186-206 (LHTL…FLMI). His187 and His202 together coordinate heme b.

It belongs to the cytochrome b family. PetB subfamily. As to quaternary structure, the 4 large subunits of the cytochrome b6-f complex are cytochrome b6, subunit IV (17 kDa polypeptide, PetD), cytochrome f and the Rieske protein, while the 4 small subunits are PetG, PetL, PetM and PetN. The complex functions as a dimer. Requires heme b as cofactor. The cofactor is heme c.

The protein localises to the plastid. It is found in the chloroplast thylakoid membrane. Its function is as follows. Component of the cytochrome b6-f complex, which mediates electron transfer between photosystem II (PSII) and photosystem I (PSI), cyclic electron flow around PSI, and state transitions. This chain is Cytochrome b6, found in Cyanidium caldarium (Red alga).